The sequence spans 219 residues: N-(5'-phosphoribosyl)anthranilate isomerase (219 aa).

This sequence belongs to the TrpF family.

It catalyses the reaction N-(5-phospho-beta-D-ribosyl)anthranilate = 1-(2-carboxyphenylamino)-1-deoxy-D-ribulose 5-phosphate. The protein operates within amino-acid biosynthesis; L-tryptophan biosynthesis; L-tryptophan from chorismate: step 3/5. This chain is N-(5'-phosphoribosyl)anthranilate isomerase, found in Chloroherpeton thalassium (strain ATCC 35110 / GB-78).